A 458-amino-acid chain; its full sequence is Cobyrinate a,c-diamide synthase (458 aa).

In terms of domain architecture, GATase cobBQ-type spans 254-445 (KIGVIRDQVF…IHVHFLSDKS (192 aa)). Cysteine 335 functions as the Nucleophile in the catalytic mechanism.

This sequence belongs to the CobB/CbiA family. Requires Mg(2+) as cofactor.

The catalysed reaction is cob(II)yrinate + 2 L-glutamine + 2 ATP + 2 H2O = cob(II)yrinate a,c diamide + 2 L-glutamate + 2 ADP + 2 phosphate + 2 H(+). Its pathway is cofactor biosynthesis; adenosylcobalamin biosynthesis; cob(II)yrinate a,c-diamide from sirohydrochlorin (anaerobic route): step 10/10. Functionally, catalyzes the ATP-dependent amidation of the two carboxylate groups at positions a and c of cobyrinate, using either L-glutamine or ammonia as the nitrogen source. This is Cobyrinate a,c-diamide synthase from Archaeoglobus fulgidus (strain ATCC 49558 / DSM 4304 / JCM 9628 / NBRC 100126 / VC-16).